The sequence spans 342 residues: GTPase Obg (342 aa).

An Obg domain is found at 1-159; that stretch reads MQFIDRAEIE…RHLRLELKLL (159 aa). The region spanning 160–328 is the OBG-type G domain; the sequence is AEVGIIGLPN…LLAKVWQQLE (169 aa). Residues 166-173, 191-195, 213-216, 280-283, and 309-311 each bind GTP; these read GLPNAGKS, FTTLI, DIPG, NKID, and SAV. The Mg(2+) site is built by S173 and T193.

This sequence belongs to the TRAFAC class OBG-HflX-like GTPase superfamily. OBG GTPase family. Monomer. The cofactor is Mg(2+).

The protein localises to the cytoplasm. Its function is as follows. An essential GTPase which binds GTP, GDP and possibly (p)ppGpp with moderate affinity, with high nucleotide exchange rates and a fairly low GTP hydrolysis rate. Plays a role in control of the cell cycle, stress response, ribosome biogenesis and in those bacteria that undergo differentiation, in morphogenesis control. This chain is GTPase Obg, found in Microcystis aeruginosa (strain NIES-843 / IAM M-2473).